An 80-amino-acid chain; its full sequence is Lantibiotic Flvalpha.b (80 aa).

A propeptide spans 1 to 38 (MNKNPIYRSEEEAKNIACGNVAAELDENSQALDAINGA) (cleaved by FlvT). 2 positions are modified to 2,3-didehydrobutyrine; by FlvM1: threonine 43 and threonine 47. The segment at residues 52-55 (TVGC) is a cross-link (beta-methyllanthionine (Thr-Cys); by FlvM1). Positions 58–68 (SYGLGNGGYCC) form a cross-link, lanthionine (Ser-Cys); by FlvM1. 2 consecutive cross-links (beta-methyllanthionine (Thr-Cys); by FlvM1) follow at residues 69–74 (TYTVEC) and 71–78 (TVECSKTC).

Post-translationally, the lanthionine formed by Ser-58 and Cys-68 forms a putative lipid II binding motif. Maturation of FlvA1 peptides involves the enzymatic conversion of Thr, and Ser into dehydrated AA and the formation of thioether bonds with cysteines. Modifications are processed by the flavecin synthetase FlvM1. This is followed by membrane translocation and cleavage of the modified precursor. In terms of processing, contains DL-lanthionine and DL-beta-methyllanthionine, when coepressed in E.coli with the flavecin synthetase FlvM1.

It localises to the secreted. Lanthionine-containing peptide antibiotic (lantibiotic) only active on Gram-positive bacteria in synergy with Flvbeta peptides, which are encoded by the same operon than Flvalpha.a. Shows antibacterial activity in synergy with Flvbeta.b, Flvbeta.c, Flvbeta.e and Flvbeta.g. Does not show antibacterial activity when tested with Flvbeta.a, Flvbeta.d, Flvbeta.f and Flvbeta.h. The bactericidal activity of lantibiotics is based on depolarization of energized bacterial cytoplasmic membranes, initiated by the formation of aqueous transmembrane pores. The chain is Lantibiotic Flvalpha.b from Ruminococcus flavefaciens.